Here is a 417-residue protein sequence, read N- to C-terminus: uncharacterized protein (417 aa).

9 helical membrane passes run 1–21, 32–52, 96–116, 168–188, 192–212, 261–281, 286–306, 351–371, and 392–412; these read MSVL…VLLS, VVGA…VPAG, VLPI…LGIM, LFAI…AGYA, VPLT…LLFA, IAFV…GGWF, LTLQ…IGVT, AIIT…ILIG, and VIAG…FIGL.

It belongs to the concentrative nucleoside transporter (CNT) (TC 2.A.41) family.

It is found in the cell inner membrane. This is an uncharacterized protein from Haemophilus influenzae (strain ATCC 51907 / DSM 11121 / KW20 / Rd).